Consider the following 331-residue polypeptide: Gamma-parvin (331 aa).

M1 carries the N-acetylmethionine modification. Residues 17 to 39 are disordered; it reads EPPAEEELSKGGKKKYLPPTSRK. 2 Calponin-homology (CH) domains span residues 44–151 and 210–317; these read EELQ…KRFQ and NAVK…CKHT.

It belongs to the parvin family. In terms of assembly, interacts with ILK; the interaction promotes the establishment of cell polarity required for leukocyte migration. Interacts with ARHGEF6; the guanine nucleotide exchange factor activity of ARHGEF6 is essential for the PARVG-induced enhancement of cell spreading. Expressed predominantly in lymphoid organs, including spleen, thymus, lymph node, bone marrow and peripheral blood leukocytes and moderately in the digestive tract, including stomach, duodenum, jejunum, ileum, ileocecum and appendix, as well as in lung and liver. Also expressed in tumors, but at a lower level than in the corresponding normal tissues.

Its subcellular location is the cell junction. The protein localises to the focal adhesion. It localises to the cell membrane. The protein resides in the cytoplasm. It is found in the cytoskeleton. Functionally, plays a role with ILK in promoting the cell adhesion and spreading of leukocytes. The polypeptide is Gamma-parvin (PARVG) (Homo sapiens (Human)).